The sequence spans 367 residues: 3-dehydroquinate synthase (367 aa).

NAD(+) contacts are provided by residues Gly111–Asp115, Thr135–Ser136, Lys148, Lys157, and Thr175–Thr178. Glu190, His254, and His271 together coordinate Zn(2+).

This sequence belongs to the sugar phosphate cyclases superfamily. Dehydroquinate synthase family. It depends on Co(2+) as a cofactor. Zn(2+) is required as a cofactor. The cofactor is NAD(+).

The protein resides in the cytoplasm. It catalyses the reaction 7-phospho-2-dehydro-3-deoxy-D-arabino-heptonate = 3-dehydroquinate + phosphate. It functions in the pathway metabolic intermediate biosynthesis; chorismate biosynthesis; chorismate from D-erythrose 4-phosphate and phosphoenolpyruvate: step 2/7. Functionally, catalyzes the conversion of 3-deoxy-D-arabino-heptulosonate 7-phosphate (DAHP) to dehydroquinate (DHQ). In Salinibacter ruber (strain DSM 13855 / M31), this protein is 3-dehydroquinate synthase.